Reading from the N-terminus, the 774-residue chain is Protein translocase subunit SecA (774 aa).

ATP-binding positions include glutamine 66, 84–88, and aspartate 474; that span reads GEGKS.

It belongs to the SecA family.

The protein resides in the plastid. It localises to the chloroplast stroma. Its subcellular location is the chloroplast thylakoid membrane. The enzyme catalyses ATP + H2O + cellular proteinSide 1 = ADP + phosphate + cellular proteinSide 2.. Its function is as follows. Has a central role in coupling the hydrolysis of ATP to the transfer of proteins across the thylakoid membrane. The sequence is that of Protein translocase subunit SecA from Cyanidioschyzon merolae (strain NIES-3377 / 10D) (Unicellular red alga).